A 257-amino-acid polypeptide reads, in one-letter code: Imidazole glycerol phosphate synthase subunit HisF (257 aa).

Residues D12 and D131 contribute to the active site.

This sequence belongs to the HisA/HisF family. As to quaternary structure, heterodimer of HisH and HisF.

The protein resides in the cytoplasm. It catalyses the reaction 5-[(5-phospho-1-deoxy-D-ribulos-1-ylimino)methylamino]-1-(5-phospho-beta-D-ribosyl)imidazole-4-carboxamide + L-glutamine = D-erythro-1-(imidazol-4-yl)glycerol 3-phosphate + 5-amino-1-(5-phospho-beta-D-ribosyl)imidazole-4-carboxamide + L-glutamate + H(+). Its pathway is amino-acid biosynthesis; L-histidine biosynthesis; L-histidine from 5-phospho-alpha-D-ribose 1-diphosphate: step 5/9. In terms of biological role, IGPS catalyzes the conversion of PRFAR and glutamine to IGP, AICAR and glutamate. The HisF subunit catalyzes the cyclization activity that produces IGP and AICAR from PRFAR using the ammonia provided by the HisH subunit. The chain is Imidazole glycerol phosphate synthase subunit HisF from Burkholderia multivorans (strain ATCC 17616 / 249).